Consider the following 207-residue polypeptide: Small ribosomal subunit protein uS4 (207 aa).

Residues Lys-33–Asn-54 form a disordered region. Polar residues predominate over residues Gly-42–Gly-53. In terms of domain architecture, S4 RNA-binding spans Ser-97–Leu-160.

This sequence belongs to the universal ribosomal protein uS4 family. In terms of assembly, part of the 30S ribosomal subunit. Contacts protein S5. The interaction surface between S4 and S5 is involved in control of translational fidelity.

Its function is as follows. One of the primary rRNA binding proteins, it binds directly to 16S rRNA where it nucleates assembly of the body of the 30S subunit. Functionally, with S5 and S12 plays an important role in translational accuracy. This chain is Small ribosomal subunit protein uS4, found in Cupriavidus pinatubonensis (strain JMP 134 / LMG 1197) (Cupriavidus necator (strain JMP 134)).